A 261-amino-acid chain; its full sequence is Ribosomal RNA small subunit methyltransferase J (261 aa).

S-adenosyl-L-methionine is bound by residues 109–110 (RD), 125–126 (ER), and aspartate 179.

It belongs to the methyltransferase superfamily. RsmJ family.

Its subcellular location is the cytoplasm. The enzyme catalyses guanosine(1516) in 16S rRNA + S-adenosyl-L-methionine = N(2)-methylguanosine(1516) in 16S rRNA + S-adenosyl-L-homocysteine + H(+). Functionally, specifically methylates the guanosine in position 1516 of 16S rRNA. In Pseudomonas paraeruginosa (strain DSM 24068 / PA7) (Pseudomonas aeruginosa (strain PA7)), this protein is Ribosomal RNA small subunit methyltransferase J.